Reading from the N-terminus, the 174-residue chain is RNA pyrophosphohydrolase (174 aa).

In terms of domain architecture, Nudix hydrolase spans 6-149 (GFRANVGIII…KRDVYRKVMK (144 aa)). A Nudix box motif is present at residues 38 to 59 (GGVDEGESAEQAMYRELYEEVG).

It belongs to the Nudix hydrolase family. RppH subfamily. Requires a divalent metal cation as cofactor.

Accelerates the degradation of transcripts by removing pyrophosphate from the 5'-end of triphosphorylated RNA, leading to a more labile monophosphorylated state that can stimulate subsequent ribonuclease cleavage. The protein is RNA pyrophosphohydrolase of Shewanella loihica (strain ATCC BAA-1088 / PV-4).